Reading from the N-terminus, the 364-residue chain is tRNA/tmRNA (uracil-C(5))-methyltransferase (364 aa).

The S-adenosyl-L-methionine site is built by Gln186, Tyr214, Asn219, Glu235, and Asp295. Cys320 functions as the Nucleophile in the catalytic mechanism. The Proton acceptor role is filled by Glu354.

The protein belongs to the class I-like SAM-binding methyltransferase superfamily. RNA M5U methyltransferase family. TrmA subfamily.

It carries out the reaction uridine(54) in tRNA + S-adenosyl-L-methionine = 5-methyluridine(54) in tRNA + S-adenosyl-L-homocysteine + H(+). The catalysed reaction is uridine(341) in tmRNA + S-adenosyl-L-methionine = 5-methyluridine(341) in tmRNA + S-adenosyl-L-homocysteine + H(+). Functionally, dual-specificity methyltransferase that catalyzes the formation of 5-methyluridine at position 54 (m5U54) in all tRNAs, and that of position 341 (m5U341) in tmRNA (transfer-mRNA). The sequence is that of tRNA/tmRNA (uracil-C(5))-methyltransferase from Azoarcus sp. (strain BH72).